The primary structure comprises 1132 residues: Ubiquitin-associated protein 2 (1132 aa).

A disordered region spans residues 1–29 (MMTSVSNDRCRGAREKPQMPTAHAAQSQK). Positions 8–17 (DRCRGAREKP) are enriched in basic and acidic residues. In terms of domain architecture, UBA spans 48–92 (KNDSDFEAKVKQLMEVTGKNQDECIVALHDCNGDVNKAINILLEG). Disordered stretches follow at residues 95 to 202 (DTTS…YSES), 221 to 248 (GTDEGPEGLAKSHSMSQEPPSKSSYGLK), 331 to 351 (NNQMAPGTANSTSASSYSPQS), 380 to 479 (LKPP…STVS), 602 to 679 (TSSA…VSTL), 713 to 749 (PLSQLSSSLSGHQNSMTSAHATRSTSTPHTHASVEST), 875 to 919 (PYSG…LNPG), 996 to 1033 (GGYGGSSQAPNKSTGSGPGKGVSVSSGTGLPDMTGSVY), 1040 to 1059 (DKQGFHAGTPPPFSLPSALG), and 1087 to 1132 (PHSQ…YWTN). Residues 109–130 (FGRESSENKENREKRTEREASR) show a composition bias toward basic and acidic residues. R166 carries the omega-N-methylarginine modification. Basic residues predominate over residues 168–182 (KRARGRGFGRGRGRG). Polar residues-rich tracts occupy residues 233–244 (HSMSQEPPSKSS) and 331–340 (NNQMAPGTAN). Positions 341–351 (STSASSYSPQS) are enriched in low complexity. A compositionally biased stretch (polar residues) spans 392–404 (SSAQQNDTASPPA). Phosphoserine is present on residues S433 and S440. Low complexity-rich tracts occupy residues 436 to 448 (LSQLSQRQQHQTQ) and 602 to 618 (TSSALSSTSPVTTSSSY). Residues 619–630 (DQSSVHTRIAYQ) show a composition bias toward polar residues. At S631 the chain carries Phosphoserine. Low complexity predominate over residues 631–644 (SSASPPDSAPGSVA). Residues 652 to 662 (SQHTVDTTSSV) are compositionally biased toward polar residues. Residues 713 to 722 (PLSQLSSSLS) show a composition bias toward low complexity. The span at 723 to 742 (GHQNSMTSAHATRSTSTPHT) shows a compositional bias: polar residues. The span at 897–914 (PAQAQQSQSQTHHTAQQP) shows a compositional bias: low complexity. Positions 1101-1115 (PSGSGQRSQPSSLQP) are enriched in low complexity. Positions 1116 to 1132 (KSQASKPTYGSAPYWTN) are enriched in polar residues.

As to quaternary structure, may interact with ANXA2.

The protein localises to the nucleus. It localises to the chromosome. It is found in the cytoplasm. Its function is as follows. Recruits the ubiquitination machinery to RNA polymerase II for polyubiquitination, removal and degradation, when the transcription-coupled nucleotide excision repair (TC-NER) machinery fails to resolve DNA damage. May promote the degradation of ANXA2. This is Ubiquitin-associated protein 2 from Mus musculus (Mouse).